The primary structure comprises 150 residues: MSKKGPFNIRNAAADTFAMVVFCFITGMFIEILISGMTFEQSLASRTLSIPVNIAIAWPYGVFRDFMLRQGARISPSKFMKNIADLVAYVTFQSPAYAMILLVVGATPEQIITAVSSNVVVSCVMGVFYGYFLDACRKAFKVPGYYTPQA.

The next 4 membrane-spanning stretches (helical) occupy residues 17–37 (FAMV…ISGM), 48–68 (LSIP…DFML), 86–106 (LVAY…VVGA), and 111–131 (IITA…FYGY).

It belongs to the AlaE exporter family.

It is found in the cell inner membrane. Exports L-alanine. The chain is L-alanine exporter AlaE from Aliivibrio fischeri (strain ATCC 700601 / ES114) (Vibrio fischeri).